The sequence spans 480 residues: Protein nucleotidyltransferase YdiU (480 aa).

Residues Gly-86, Gly-88, Arg-89, Lys-109, Asp-121, Gly-122, Arg-172, and Arg-179 each coordinate ATP. The active-site Proton acceptor is Asp-248. Residues Asn-249 and Asp-258 each contribute to the Mg(2+) site. Residue Asp-258 participates in ATP binding.

This sequence belongs to the SELO family. It depends on Mg(2+) as a cofactor. Mn(2+) is required as a cofactor.

It catalyses the reaction L-seryl-[protein] + ATP = 3-O-(5'-adenylyl)-L-seryl-[protein] + diphosphate. It carries out the reaction L-threonyl-[protein] + ATP = 3-O-(5'-adenylyl)-L-threonyl-[protein] + diphosphate. The catalysed reaction is L-tyrosyl-[protein] + ATP = O-(5'-adenylyl)-L-tyrosyl-[protein] + diphosphate. The enzyme catalyses L-histidyl-[protein] + UTP = N(tele)-(5'-uridylyl)-L-histidyl-[protein] + diphosphate. It catalyses the reaction L-seryl-[protein] + UTP = O-(5'-uridylyl)-L-seryl-[protein] + diphosphate. It carries out the reaction L-tyrosyl-[protein] + UTP = O-(5'-uridylyl)-L-tyrosyl-[protein] + diphosphate. In terms of biological role, nucleotidyltransferase involved in the post-translational modification of proteins. It can catalyze the addition of adenosine monophosphate (AMP) or uridine monophosphate (UMP) to a protein, resulting in modifications known as AMPylation and UMPylation. This Salmonella paratyphi A (strain ATCC 9150 / SARB42) protein is Protein nucleotidyltransferase YdiU.